Consider the following 449-residue polypeptide: 1H-pyrrole-2-carbonyl-[peptidyl-carrier protein] chlorinase (449 aa).

FAD is bound by residues A16, E35, R41, H43, V44, S47, R123, I147, and D316. Chloride contacts are provided by S327 and G328. V329 is an FAD binding site.

It belongs to the flavin-dependent halogenase family. Homodimer.

It carries out the reaction (1H-pyrrole-2-carbonyl)-[peptidyl-carrier protein] + 2 FADH2 + 2 chloride + 2 O2 = (4,5-dichloro-1H-pyrrole-2-carbonyl)-[peptidyl-carrier protein] + 2 FAD + 4 H2O. The enzyme catalyses (1H-pyrrole-2-carbonyl)-[peptidyl-carrier protein] + FADH2 + chloride + O2 = (5-chloro-1H-pyrrole-2-carbonyl)-[peptidyl-carrier protein] + FAD + 2 H2O. It catalyses the reaction (5-chloro-1H-pyrrole-2-carbonyl)-[peptidyl-carrier protein] + FADH2 + chloride + O2 = (4,5-dichloro-1H-pyrrole-2-carbonyl)-[peptidyl-carrier protein] + FAD + 2 H2O. Its pathway is antibiotic biosynthesis. Involved in the biosynthesis of the antibiotic pyoluteorin. Catalyzes the dichlorination of the pyrrole ring of pyrrolyl-S-PltL, generating the 5-chloropyrrolyl-S-PltL intermediate and then the 4,5-dichloropyrrolyl-S-PltL product. This Pseudomonas fluorescens (strain ATCC BAA-477 / NRRL B-23932 / Pf-5) protein is 1H-pyrrole-2-carbonyl-[peptidyl-carrier protein] chlorinase.